A 414-amino-acid polypeptide reads, in one-letter code: Probable protein phosphatase 2C 80 (414 aa).

A PPM-type phosphatase domain is found at 174–411 (SCYLPHPEKE…DDITAVVSYV (238 aa)). Residues Asp-204, Gly-205, Asp-336, and Asp-402 each contribute to the Mn(2+) site.

The protein belongs to the PP2C family. Mg(2+) is required as a cofactor. Mn(2+) serves as cofactor.

The enzyme catalyses O-phospho-L-seryl-[protein] + H2O = L-seryl-[protein] + phosphate. It carries out the reaction O-phospho-L-threonyl-[protein] + H2O = L-threonyl-[protein] + phosphate. The chain is Probable protein phosphatase 2C 80 from Arabidopsis thaliana (Mouse-ear cress).